Consider the following 490-residue polypeptide: Sporulation-specific protein 1 (490 aa).

The Protein kinase domain maps to 18–272; that stretch reads YSIQSCIGRG…AYNLLSFEFV (255 aa). Residues 24-32 and Lys47 contribute to the ATP site; that span reads IGRGNFGDV. Asp141 acts as the Proton acceptor in catalysis.

The protein belongs to the protein kinase superfamily. STE Ser/Thr protein kinase family. STE20 subfamily.

The protein localises to the nucleus. It is found in the cytoplasm. The catalysed reaction is L-seryl-[protein] + ATP = O-phospho-L-seryl-[protein] + ADP + H(+). It catalyses the reaction L-threonyl-[protein] + ATP = O-phospho-L-threonyl-[protein] + ADP + H(+). Functionally, serine/threonine protein kinase required for spore wall development. In Saccharomyces cerevisiae (strain ATCC 204508 / S288c) (Baker's yeast), this protein is Sporulation-specific protein 1 (SPS1).